The primary structure comprises 89 residues: Putative regulatory protein CYA_2696 (89 aa).

This sequence belongs to the RemA family.

This is Putative regulatory protein CYA_2696 from Synechococcus sp. (strain JA-3-3Ab) (Cyanobacteria bacterium Yellowstone A-Prime).